Reading from the N-terminus, the 236-residue chain is tRNA (guanine-N(7)-)-methyltransferase (236 aa).

The tract at residues 1–23 (MEADVQRAQQAQLEKGSSVPPWT) is disordered. Positions 69, 94, 121, and 144 each coordinate S-adenosyl-L-methionine. Residue Asp-144 is part of the active site. Substrate-binding residues include Lys-148 and Asp-180.

Belongs to the class I-like SAM-binding methyltransferase superfamily. TrmB family.

The enzyme catalyses guanosine(46) in tRNA + S-adenosyl-L-methionine = N(7)-methylguanosine(46) in tRNA + S-adenosyl-L-homocysteine. It functions in the pathway tRNA modification; N(7)-methylguanine-tRNA biosynthesis. In terms of biological role, catalyzes the formation of N(7)-methylguanine at position 46 (m7G46) in tRNA. The sequence is that of tRNA (guanine-N(7)-)-methyltransferase from Synechococcus sp. (strain JA-3-3Ab) (Cyanobacteria bacterium Yellowstone A-Prime).